We begin with the raw amino-acid sequence, 286 residues long: Light-independent protochlorophyllide reductase iron-sulfur ATP-binding protein (286 aa).

Residues 10 to 15 (GIGKST) and Lys39 each bind ATP. Mg(2+) is bound at residue Ser14. The [4Fe-4S] cluster site is built by Cys95 and Cys129. 180–181 (NR) is a binding site for ATP.

It belongs to the NifH/BchL/ChlL family. Homodimer. Protochlorophyllide reductase is composed of three subunits; ChlL, ChlN and ChlB. [4Fe-4S] cluster is required as a cofactor.

The catalysed reaction is chlorophyllide a + oxidized 2[4Fe-4S]-[ferredoxin] + 2 ADP + 2 phosphate = protochlorophyllide a + reduced 2[4Fe-4S]-[ferredoxin] + 2 ATP + 2 H2O. The protein operates within porphyrin-containing compound metabolism; chlorophyll biosynthesis (light-independent). Its function is as follows. Component of the dark-operative protochlorophyllide reductase (DPOR) that uses Mg-ATP and reduced ferredoxin to reduce ring D of protochlorophyllide (Pchlide) to form chlorophyllide a (Chlide). This reaction is light-independent. The L component serves as a unique electron donor to the NB-component of the complex, and binds Mg-ATP. The sequence is that of Light-independent protochlorophyllide reductase iron-sulfur ATP-binding protein from Synechococcus elongatus (strain ATCC 33912 / PCC 7942 / FACHB-805) (Anacystis nidulans R2).